Reading from the N-terminus, the 441-residue chain is Homogentisate 1,2-dioxygenase (441 aa).

His297 functions as the Proton acceptor in the catalytic mechanism. His340 and Glu346 together coordinate Fe cation. 2 residues coordinate homogentisate: Tyr355 and His376. His376 serves as a coordination point for Fe cation.

It belongs to the homogentisate dioxygenase family. As to quaternary structure, hexamer; dimer of trimers. Fe cation serves as cofactor.

It carries out the reaction homogentisate + O2 = 4-maleylacetoacetate + H(+). The protein operates within amino-acid degradation; L-phenylalanine degradation; acetoacetate and fumarate from L-phenylalanine: step 4/6. Its function is as follows. Involved in the catabolism of homogentisate (2,5-dihydroxyphenylacetate or 2,5-OH-PhAc), a central intermediate in the degradation of phenylalanine and tyrosine. Catalyzes the oxidative ring cleavage of the aromatic ring of homogentisate to yield maleylacetoacetate. This chain is Homogentisate 1,2-dioxygenase, found in Streptomyces coelicolor (strain ATCC BAA-471 / A3(2) / M145).